The sequence spans 168 residues: Phosphopantetheine adenylyltransferase (168 aa).

Threonine 14 contacts substrate. ATP-binding positions include 14-15 (TF) and histidine 22. 3 residues coordinate substrate: lysine 46, leucine 78, and arginine 92. Residues 93–95 (GLR), glutamate 103, and 128–134 (YSFISSS) contribute to the ATP site.

Belongs to the bacterial CoaD family. In terms of assembly, homohexamer. The cofactor is Mg(2+).

The protein localises to the cytoplasm. It carries out the reaction (R)-4'-phosphopantetheine + ATP + H(+) = 3'-dephospho-CoA + diphosphate. The protein operates within cofactor biosynthesis; coenzyme A biosynthesis; CoA from (R)-pantothenate: step 4/5. Reversibly transfers an adenylyl group from ATP to 4'-phosphopantetheine, yielding dephospho-CoA (dPCoA) and pyrophosphate. The sequence is that of Phosphopantetheine adenylyltransferase from Xanthomonas oryzae pv. oryzae (strain MAFF 311018).